A 249-amino-acid chain; its full sequence is Chromosome-partitioning ATPase Soj (249 aa).

Residues K15, G16, G17, V18, G19, K20, T21, T22, P207, and N209 each contribute to the ATP site. ADP is bound at residue G17. ADP contacts are provided by G19, K20, T21, T22, P207, and N209. T21 lines the Mg(2+) pocket.

This sequence belongs to the ParA family. As to quaternary structure, monomer in the absence of nucleotides or presence of ADP, in the presence of ATP is found in a monomer-dimer equilibrium. ATP-binding is required for DNA-binding. Probably interacts with Spo0J.

It carries out the reaction ATP + H2O = ADP + phosphate + H(+). ATPase activity is stimulated 10-fold in the presence of Spo0J and parS DNA (a plasmid centromere-like site or plasmid DNA itself). The first 20 residues of Spo0J stimulate its ATPase activity by 8%. Its function is as follows. ATPase probably involved in chromosome partitioning. Cooperatively binds dsDNA, forming nucleoprotein filaments in a strictly ATP-dependent fashion. Can also bind ssDNA with lower affinity. The sequence is that of Chromosome-partitioning ATPase Soj from Thermus thermophilus (strain ATCC BAA-163 / DSM 7039 / HB27).